Consider the following 175-residue polypeptide: MNLKEKFRHVLNFPKEGIDFIDITTVLQDKDAFKYAIDSLVNLVKDLDFDLIVGPESRGFIFGAPVAYVLNKGLVLVRKKGKLPYKTVSVEYELEYGKDILEMHIDAIQPGQKVVIIDDLLATGGTTLSNIKLVEKLGGKVVGIAYLVELTYLNGRENLKGYDVRSVVQFESSLI.

It belongs to the purine/pyrimidine phosphoribosyltransferase family. Homodimer.

It localises to the cytoplasm. The catalysed reaction is AMP + diphosphate = 5-phospho-alpha-D-ribose 1-diphosphate + adenine. It functions in the pathway purine metabolism; AMP biosynthesis via salvage pathway; AMP from adenine: step 1/1. Its function is as follows. Catalyzes a salvage reaction resulting in the formation of AMP, that is energically less costly than de novo synthesis. The protein is Adenine phosphoribosyltransferase of Caldicellulosiruptor saccharolyticus (strain ATCC 43494 / DSM 8903 / Tp8T 6331).